The primary structure comprises 314 residues: Fumarylacetoacetate hydrolase domain-containing protein 2 (314 aa).

A divalent metal cation-binding residues include Glu-159, Glu-161, and Asp-190. N6-acetyllysine; alternate is present on Lys-203. Lys-203 is modified (N6-succinyllysine; alternate). Lys-234 carries the post-translational modification N6-acetyllysine.

This sequence belongs to the FAH family. Ca(2+) is required as a cofactor. Mg(2+) serves as cofactor.

Functionally, may have hydrolase activity. This Pongo abelii (Sumatran orangutan) protein is Fumarylacetoacetate hydrolase domain-containing protein 2 (FAHD2).